The sequence spans 134 residues: Small ribosomal subunit protein uS9 (134 aa).

Residues 114–134 form a disordered region; it reads EVERKKYGLKKARRAPQFSKR. The span at 120–134 shows a compositional bias: basic residues; it reads YGLKKARRAPQFSKR.

The protein belongs to the universal ribosomal protein uS9 family.

In Thermotoga neapolitana (strain ATCC 49049 / DSM 4359 / NBRC 107923 / NS-E), this protein is Small ribosomal subunit protein uS9.